A 520-amino-acid polypeptide reads, in one-letter code: GMP synthase [glutamine-hydrolyzing] (520 aa).

One can recognise a Glutamine amidotransferase type-1 domain in the interval 9–202; that stretch reads RVLIVDFGSQ…LFNIAGLKGD (194 aa). Cys-86 functions as the Nucleophile in the catalytic mechanism. Residues His-176 and Glu-178 contribute to the active site. The 193-residue stretch at 203–395 folds into the GMPS ATP-PPase domain; that stretch reads WTMAAFRQEM…LGLAPAFVGR (193 aa). 230 to 236 serves as a coordination point for ATP; it reads SGGVDSS.

Homodimer.

It carries out the reaction XMP + L-glutamine + ATP + H2O = GMP + L-glutamate + AMP + diphosphate + 2 H(+). The protein operates within purine metabolism; GMP biosynthesis; GMP from XMP (L-Gln route): step 1/1. In terms of biological role, catalyzes the synthesis of GMP from XMP. This Caulobacter vibrioides (strain ATCC 19089 / CIP 103742 / CB 15) (Caulobacter crescentus) protein is GMP synthase [glutamine-hydrolyzing].